The sequence spans 238 residues: Zinc import ATP-binding protein ZnuC (238 aa).

The 216-residue stretch at 5-220 (IQLNNISVNF…SEFIAIFGNI (216 aa)) folds into the ABC transporter domain. 37-44 (GPNGAGKS) contacts ATP.

It belongs to the ABC transporter superfamily. Zinc importer (TC 3.A.1.15.5) family. The complex is composed of two ATP-binding proteins (ZnuC), two transmembrane proteins (ZnuB) and a solute-binding protein (ZnuA).

The protein resides in the cell membrane. It carries out the reaction Zn(2+)(out) + ATP(in) + H2O(in) = Zn(2+)(in) + ADP(in) + phosphate(in) + H(+)(in). Its function is as follows. Part of the ABC transporter complex ZnuABC involved in zinc import. Responsible for energy coupling to the transport system. This chain is Zinc import ATP-binding protein ZnuC, found in Buchnera aphidicola subsp. Baizongia pistaciae (strain Bp).